A 242-amino-acid polypeptide reads, in one-letter code: Biosynthetic peptidoglycan transglycosylase (242 aa).

A helical transmembrane segment spans residues 15 to 35; that stretch reads FLLLLMVVLAVFWGGGIALFS.

This sequence belongs to the glycosyltransferase 51 family.

The protein resides in the cell inner membrane. It catalyses the reaction [GlcNAc-(1-&gt;4)-Mur2Ac(oyl-L-Ala-gamma-D-Glu-L-Lys-D-Ala-D-Ala)](n)-di-trans,octa-cis-undecaprenyl diphosphate + beta-D-GlcNAc-(1-&gt;4)-Mur2Ac(oyl-L-Ala-gamma-D-Glu-L-Lys-D-Ala-D-Ala)-di-trans,octa-cis-undecaprenyl diphosphate = [GlcNAc-(1-&gt;4)-Mur2Ac(oyl-L-Ala-gamma-D-Glu-L-Lys-D-Ala-D-Ala)](n+1)-di-trans,octa-cis-undecaprenyl diphosphate + di-trans,octa-cis-undecaprenyl diphosphate + H(+). Its pathway is cell wall biogenesis; peptidoglycan biosynthesis. Functionally, peptidoglycan polymerase that catalyzes glycan chain elongation from lipid-linked precursors. This Shigella sonnei (strain Ss046) protein is Biosynthetic peptidoglycan transglycosylase.